We begin with the raw amino-acid sequence, 617 residues long: Phosphomethylpyrimidine synthase (617 aa).

Residues Asn230, Met259, Tyr288, His324, 344 to 346 (SRG), 385 to 388 (DGLR), and Glu424 each bind substrate. His428 is a binding site for Zn(2+). Tyr451 contacts substrate. Zn(2+) is bound at residue His492. Cys572, Cys575, and Cys580 together coordinate [4Fe-4S] cluster.

Belongs to the ThiC family. Homodimer. [4Fe-4S] cluster serves as cofactor.

The catalysed reaction is 5-amino-1-(5-phospho-beta-D-ribosyl)imidazole + S-adenosyl-L-methionine = 4-amino-2-methyl-5-(phosphooxymethyl)pyrimidine + CO + 5'-deoxyadenosine + formate + L-methionine + 3 H(+). The protein operates within cofactor biosynthesis; thiamine diphosphate biosynthesis. Its function is as follows. Catalyzes the synthesis of the hydroxymethylpyrimidine phosphate (HMP-P) moiety of thiamine from aminoimidazole ribotide (AIR) in a radical S-adenosyl-L-methionine (SAM)-dependent reaction. The sequence is that of Phosphomethylpyrimidine synthase from Paracidovorax citrulli (strain AAC00-1) (Acidovorax citrulli).